A 284-amino-acid polypeptide reads, in one-letter code: Bifunctional protein FolD (284 aa).

Residues 166–168 (GRS) and Ser191 each bind NADP(+).

This sequence belongs to the tetrahydrofolate dehydrogenase/cyclohydrolase family. Homodimer.

It carries out the reaction (6R)-5,10-methylene-5,6,7,8-tetrahydrofolate + NADP(+) = (6R)-5,10-methenyltetrahydrofolate + NADPH. The enzyme catalyses (6R)-5,10-methenyltetrahydrofolate + H2O = (6R)-10-formyltetrahydrofolate + H(+). The protein operates within one-carbon metabolism; tetrahydrofolate interconversion. Catalyzes the oxidation of 5,10-methylenetetrahydrofolate to 5,10-methenyltetrahydrofolate and then the hydrolysis of 5,10-methenyltetrahydrofolate to 10-formyltetrahydrofolate. The chain is Bifunctional protein FolD from Leptospira interrogans serogroup Icterohaemorrhagiae serovar copenhageni (strain Fiocruz L1-130).